The primary structure comprises 851 residues: DNA mismatch repair protein MutS (851 aa).

602–609 (GPNMSGKS) lines the ATP pocket.

It belongs to the DNA mismatch repair MutS family.

Functionally, this protein is involved in the repair of mismatches in DNA. It is possible that it carries out the mismatch recognition step. This protein has a weak ATPase activity. In Streptococcus pyogenes serotype M2 (strain MGAS10270), this protein is DNA mismatch repair protein MutS.